A 339-amino-acid polypeptide reads, in one-letter code: Anthranilate phosphoribosyltransferase (339 aa).

5-phospho-alpha-D-ribose 1-diphosphate is bound by residues G79, 82-83 (GD), S87, 89-92 (NIST), 107-115 (KHGNRSISS), and S119. An anthranilate-binding site is contributed by G79. Position 91 (S91) interacts with Mg(2+). N110 is an anthranilate binding site. Residue R165 participates in anthranilate binding. 2 residues coordinate Mg(2+): D224 and E225.

Belongs to the anthranilate phosphoribosyltransferase family. As to quaternary structure, homodimer. Mg(2+) is required as a cofactor.

The enzyme catalyses N-(5-phospho-beta-D-ribosyl)anthranilate + diphosphate = 5-phospho-alpha-D-ribose 1-diphosphate + anthranilate. It functions in the pathway amino-acid biosynthesis; L-tryptophan biosynthesis; L-tryptophan from chorismate: step 2/5. In terms of biological role, catalyzes the transfer of the phosphoribosyl group of 5-phosphorylribose-1-pyrophosphate (PRPP) to anthranilate to yield N-(5'-phosphoribosyl)-anthranilate (PRA). The chain is Anthranilate phosphoribosyltransferase from Listeria welshimeri serovar 6b (strain ATCC 35897 / DSM 20650 / CCUG 15529 / CIP 8149 / NCTC 11857 / SLCC 5334 / V8).